The chain runs to 577 residues: Glycine--tRNA ligase (577 aa).

Substrate-binding residues include Arg98 and Glu164. ATP is bound by residues 196-198 (RNE), 206-211 (IRLREF), 328-329 (EC), and 451-454 (GIDR). 211 to 215 (FTQAE) serves as a coordination point for substrate. 447-451 (EPSYG) provides a ligand contact to substrate.

It belongs to the class-II aminoacyl-tRNA synthetase family.

Its subcellular location is the cytoplasm. The enzyme catalyses tRNA(Gly) + glycine + ATP = glycyl-tRNA(Gly) + AMP + diphosphate. In terms of biological role, catalyzes the attachment of glycine to tRNA(Gly). The chain is Glycine--tRNA ligase from Methanocaldococcus jannaschii (strain ATCC 43067 / DSM 2661 / JAL-1 / JCM 10045 / NBRC 100440) (Methanococcus jannaschii).